The following is a 729-amino-acid chain: Fatty acid oxidation complex subunit alpha (729 aa).

The enoyl-CoA hydratase/isomerase stretch occupies residues 1-189 (MLYKGDTLYL…KIGLVDGVVK (189 aa)). Asp296 contacts substrate. The interval 311–729 (ETPKQAAVLG…ARPVGDLKTA (419 aa)) is 3-hydroxyacyl-CoA dehydrogenase. Residues Met324, Asp343, 400-402 (VVE), Lys407, and Ser429 each bind NAD(+). His450 serves as the catalytic For 3-hydroxyacyl-CoA dehydrogenase activity. Asn453 is an NAD(+) binding site. Asn500 and Tyr660 together coordinate substrate. Residues 708-729 (RHNEPYYPPVEPARPVGDLKTA) are disordered.

The protein in the N-terminal section; belongs to the enoyl-CoA hydratase/isomerase family. This sequence in the C-terminal section; belongs to the 3-hydroxyacyl-CoA dehydrogenase family. As to quaternary structure, heterotetramer of two alpha chains (FadB) and two beta chains (FadA).

The catalysed reaction is a (3S)-3-hydroxyacyl-CoA + NAD(+) = a 3-oxoacyl-CoA + NADH + H(+). The enzyme catalyses a (3S)-3-hydroxyacyl-CoA = a (2E)-enoyl-CoA + H2O. It catalyses the reaction a 4-saturated-(3S)-3-hydroxyacyl-CoA = a (3E)-enoyl-CoA + H2O. It carries out the reaction (3S)-3-hydroxybutanoyl-CoA = (3R)-3-hydroxybutanoyl-CoA. The catalysed reaction is a (3Z)-enoyl-CoA = a 4-saturated (2E)-enoyl-CoA. The enzyme catalyses a (3E)-enoyl-CoA = a 4-saturated (2E)-enoyl-CoA. Its pathway is lipid metabolism; fatty acid beta-oxidation. Functionally, involved in the aerobic and anaerobic degradation of long-chain fatty acids via beta-oxidation cycle. Catalyzes the formation of 3-oxoacyl-CoA from enoyl-CoA via L-3-hydroxyacyl-CoA. It can also use D-3-hydroxyacyl-CoA and cis-3-enoyl-CoA as substrate. The chain is Fatty acid oxidation complex subunit alpha from Escherichia coli O7:K1 (strain IAI39 / ExPEC).